A 155-amino-acid polypeptide reads, in one-letter code: Small ribosomal subunit protein uS7 (155 aa).

The protein belongs to the universal ribosomal protein uS7 family. Part of the 30S ribosomal subunit. Contacts proteins S9 and S11.

Its function is as follows. One of the primary rRNA binding proteins, it binds directly to 16S rRNA where it nucleates assembly of the head domain of the 30S subunit. Is located at the subunit interface close to the decoding center, probably blocks exit of the E-site tRNA. This chain is Small ribosomal subunit protein uS7, found in Ureaplasma parvum serovar 3 (strain ATCC 27815 / 27 / NCTC 11736).